Consider the following 82-residue polypeptide: Transcription elongation factor 1 homolog (82 aa).

Cys26, Cys29, Cys50, and Cys53 together coordinate Zn(2+).

It belongs to the ELOF1 family.

The protein localises to the nucleus. In terms of biological role, transcription elongation factor implicated in the maintenance of proper chromatin structure in actively transcribed regions. This is Transcription elongation factor 1 homolog from Drosophila melanogaster (Fruit fly).